The chain runs to 347 residues: Bifunctional dihydroflavonol 4-reductase/flavanone 4-reductase (347 aa).

NADP(+) contacts are provided by Lys44 and Tyr163.

It belongs to the NAD(P)-dependent epimerase/dehydratase family. Dihydroflavonol-4-reductase subfamily.

It catalyses the reaction a (2R,3S,4S)-leucoanthocyanidin + NADP(+) = a (2R,3R)-dihydroflavonol + NADPH + H(+). It carries out the reaction (2S)-flavan-4-ol + NADP(+) = (2S)-flavanone + NADPH + H(+). Functionally, bifunctional enzyme involved in the flavonoid metabolism. May use dihydroquercetin, eriodictyol, garbanzol (5-deoxydihydrokaempferol), dihydrofisetin (5-deoxydihydroquercetin), dihydrokaempferol to a low extent (5%), but not naringenin, 5-deoxynaringenin or butin (5-deoxyeriodictyol) as substrate. In Pyrus communis (Pear), this protein is Bifunctional dihydroflavonol 4-reductase/flavanone 4-reductase (DFR).